The primary structure comprises 261 residues: CD40 ligand (261 aa).

The Cytoplasmic segment spans residues 1-22 (MVETYHQPAPRSAATGLPVSMK). Residues 23–43 (IFMYLLTVFLITQMIGSALFA) form a helical; Signal-anchor for type II membrane protein membrane-spanning segment. The Extracellular portion of the chain corresponds to 44 to 261 (VYLHRRLDKI…GFTSFGLLKL (218 aa)). Residues 122-261 (IAAHVISEAS…GFTSFGLLKL (140 aa)) form the THD domain. A disulfide bridge connects residues C178 and C218. N-linked (GlcNAc...) asparagine glycosylation is present at N240.

It belongs to the tumor necrosis factor family. In terms of assembly, homotrimer. Interacts with CD28. CD40 ligand, soluble form: Exists as either a monomer or a homotrimer. Forms a ternary complex between CD40 and integrins for CD40-CD40LG signaling. The soluble form derives from the membrane form by proteolytic processing.

It is found in the cell membrane. Its subcellular location is the cell surface. The protein resides in the secreted. Functionally, cytokine that acts as a ligand to CD40/TNFRSF5. Costimulates T-cell proliferation and cytokine production. Its cross-linking on T-cells generates a costimulatory signal which enhances the production of IL4 and IL10 in conjunction with the TCR/CD3 ligation and CD28 costimulation. Induces the activation of NF-kappa-B. Induces the activation of kinases MAPK8 and PAK2 in T-cells. Mediates B-cell proliferation in the absence of co-stimulus as well as IgE production in the presence of IL4. Involved in immunoglobulin class switching. Its function is as follows. Acts as a ligand for integrins, specifically ITGA5:ITGB1 and ITGAV:ITGB3; both integrins and the CD40 receptor are required for activation of CD40-CD40LG signaling, which have cell-type dependent effects, such as B-cell activation, NF-kappa-B signaling and anti-apoptotic signaling. This chain is CD40 ligand (CD40LG), found in Aotus trivirgatus (Three-striped night monkey).